Here is a 271-residue protein sequence, read N- to C-terminus: Zinc finger CCHC domain-containing protein 9 (271 aa).

The tract at residues 1 to 67 is disordered; that stretch reads MTRWARVTTS…RKKNKKKKEY (67 aa). Positions 7–20 are enriched in polar residues; it reads VTTSNSKRPLSATS. A compositionally biased stretch (basic and acidic residues) spans 22–33; the sequence is EDMKKGSVERAD. The span at 35 to 46 shows a compositional bias: polar residues; the sequence is SLPNRKQCQSSR. Basic residues predominate over residues 56-65; it reads AKRKKNKKKK. 4 CCHC-type zinc fingers span residues 128–145, 155–172, 184–201, and 211–228; these read MVCF…DCPA, GICY…KCRA, AKCF…SCPD, and GSCK…DCRE.

As to expression, detected in brain cortex and in testis.

The protein resides in the nucleus. Its subcellular location is the nucleolus. Its function is as follows. May down-regulate transcription mediated by NF-kappa-B and the serum response element. This is Zinc finger CCHC domain-containing protein 9 (Zcchc9) from Mus musculus (Mouse).